Consider the following 231-residue polypeptide: Biosynthetic peptidoglycan transglycosylase (231 aa).

Residues 10 to 30 (LLLLGLIGLFLVWQLWLLGWV) form a helical membrane-spanning segment.

Belongs to the glycosyltransferase 51 family.

It is found in the cell inner membrane. It carries out the reaction [GlcNAc-(1-&gt;4)-Mur2Ac(oyl-L-Ala-gamma-D-Glu-L-Lys-D-Ala-D-Ala)](n)-di-trans,octa-cis-undecaprenyl diphosphate + beta-D-GlcNAc-(1-&gt;4)-Mur2Ac(oyl-L-Ala-gamma-D-Glu-L-Lys-D-Ala-D-Ala)-di-trans,octa-cis-undecaprenyl diphosphate = [GlcNAc-(1-&gt;4)-Mur2Ac(oyl-L-Ala-gamma-D-Glu-L-Lys-D-Ala-D-Ala)](n+1)-di-trans,octa-cis-undecaprenyl diphosphate + di-trans,octa-cis-undecaprenyl diphosphate + H(+). It functions in the pathway cell wall biogenesis; peptidoglycan biosynthesis. In terms of biological role, peptidoglycan polymerase that catalyzes glycan chain elongation from lipid-linked precursors. The polypeptide is Biosynthetic peptidoglycan transglycosylase (Dechloromonas aromatica (strain RCB)).